A 640-amino-acid polypeptide reads, in one-letter code: Threonine--tRNA ligase (640 aa).

The region spanning 1 to 59 (MKIKVVLPDGSEREYEKGTKPMEIAREVGIKKVIGAVVDEELWDLKRPLERDCRIRFVT) is the TGS domain. A catalytic region spans residues 240–531 (DHRKLGPQLE…LIEHFAGAFP (292 aa)). Residues C332, H383, and H508 each coordinate Zn(2+).

This sequence belongs to the class-II aminoacyl-tRNA synthetase family. As to quaternary structure, homodimer. Zn(2+) serves as cofactor.

It localises to the cytoplasm. It carries out the reaction tRNA(Thr) + L-threonine + ATP = L-threonyl-tRNA(Thr) + AMP + diphosphate + H(+). In terms of biological role, catalyzes the attachment of threonine to tRNA(Thr) in a two-step reaction: L-threonine is first activated by ATP to form Thr-AMP and then transferred to the acceptor end of tRNA(Thr). Also edits incorrectly charged L-seryl-tRNA(Thr). The sequence is that of Threonine--tRNA ligase from Thermotoga neapolitana (strain ATCC 49049 / DSM 4359 / NBRC 107923 / NS-E).